Here is a 159-residue protein sequence, read N- to C-terminus: 3-dehydroquinate dehydratase (159 aa).

Y22 acts as the Proton acceptor in catalysis. N73, H79, and D86 together coordinate substrate. H99 (proton donor) is an active-site residue. Substrate-binding positions include 100 to 101 (IS) and R110.

It belongs to the type-II 3-dehydroquinase family. In terms of assembly, homododecamer.

The enzyme catalyses 3-dehydroquinate = 3-dehydroshikimate + H2O. Its pathway is metabolic intermediate biosynthesis; chorismate biosynthesis; chorismate from D-erythrose 4-phosphate and phosphoenolpyruvate: step 3/7. In terms of biological role, catalyzes a trans-dehydration via an enolate intermediate. This Campylobacter jejuni subsp. jejuni serotype O:6 (strain 81116 / NCTC 11828) protein is 3-dehydroquinate dehydratase.